A 180-amino-acid chain; its full sequence is NADH-quinone oxidoreductase subunit I (180 aa).

2 4Fe-4S ferredoxin-type domains span residues 48-80 (IVLT…LQKS) and 90-119 (EFFR…LTPD). The [4Fe-4S] cluster site is built by C60, C63, C66, C70, C99, C102, C105, and C109. The span at 161–174 (KPKGDAENEAKPID) shows a compositional bias: basic and acidic residues. The tract at residues 161-180 (KPKGDAENEAKPIDVKSLLP) is disordered.

Belongs to the complex I 23 kDa subunit family. In terms of assembly, NDH-1 is composed of 14 different subunits. Subunits NuoA, H, J, K, L, M, N constitute the membrane sector of the complex. [4Fe-4S] cluster is required as a cofactor.

Its subcellular location is the cell inner membrane. It carries out the reaction a quinone + NADH + 5 H(+)(in) = a quinol + NAD(+) + 4 H(+)(out). In terms of biological role, NDH-1 shuttles electrons from NADH, via FMN and iron-sulfur (Fe-S) centers, to quinones in the respiratory chain. The immediate electron acceptor for the enzyme in this species is believed to be ubiquinone. Couples the redox reaction to proton translocation (for every two electrons transferred, four hydrogen ions are translocated across the cytoplasmic membrane), and thus conserves the redox energy in a proton gradient. This is NADH-quinone oxidoreductase subunit I from Aeromonas hydrophila subsp. hydrophila (strain ATCC 7966 / DSM 30187 / BCRC 13018 / CCUG 14551 / JCM 1027 / KCTC 2358 / NCIMB 9240 / NCTC 8049).